Consider the following 190-residue polypeptide: Lipid A 1-phosphatase (190 aa).

A run of 5 helical transmembrane segments spans residues 22–42 (LLAL…PKVP), 60–80 (FIPT…VGLF), 117–137 (GNFN…AFLM), 145–162 (YFWL…RIYL), and 164–184 (MHTI…VSLF).

This sequence belongs to the lipid A LpxE 1-phosphatase family. It depends on Does not require divalent cations. as a cofactor.

The protein localises to the cell inner membrane. It participates in bacterial outer membrane biogenesis; LPS lipid A biosynthesis. Its function is as follows. Removes the 1-phosphate group from tetra- and probably hexaacylated lipid A species, has no requirement for the Kdo moiety of lipid A. Has no 4'-phosphatase activity. Has no activity on phospholipids (phosphatidylglycerol, phosphatidylethanolamine or cardiolipin). This enzyme has to act before EptA can attach phosphoethanolamine to the 1-position of lipid A. Absence of the 1-phosphate group renders the bacteria partially resistant to host-derived cationic antimicrobial peptides (CAMP), allowing it to camouflage itself from the host innate immune response, and plays a role in the long-term colonization of the host's stomach. This chain is Lipid A 1-phosphatase, found in Helicobacter pylori (strain ATCC 700392 / 26695) (Campylobacter pylori).